The chain runs to 349 residues: tRNA N6-adenosine threonylcarbamoyltransferase (349 aa).

Positions 117, 121, and 138 each coordinate Fe cation. Substrate-binding positions include 138–142 (YVAGG), Asp-170, Asp-191, and Asn-271. Asp-299 provides a ligand contact to Fe cation.

Belongs to the KAE1 / TsaD family. It depends on Fe(2+) as a cofactor.

The protein resides in the cytoplasm. It catalyses the reaction L-threonylcarbamoyladenylate + adenosine(37) in tRNA = N(6)-L-threonylcarbamoyladenosine(37) in tRNA + AMP + H(+). Required for the formation of a threonylcarbamoyl group on adenosine at position 37 (t(6)A37) in tRNAs that read codons beginning with adenine. Is probably involved in the transfer of the threonylcarbamoyl moiety of threonylcarbamoyl-AMP (TC-AMP) to the N6 group of A37. This chain is tRNA N6-adenosine threonylcarbamoyltransferase, found in Aeropyrum pernix (strain ATCC 700893 / DSM 11879 / JCM 9820 / NBRC 100138 / K1).